A 512-amino-acid polypeptide reads, in one-letter code: Maturase K (512 aa).

The protein belongs to the intron maturase 2 family. MatK subfamily.

It localises to the plastid. The protein localises to the chloroplast. Functionally, usually encoded in the trnK tRNA gene intron. Probably assists in splicing its own and other chloroplast group II introns. In Platanus occidentalis (Sycamore), this protein is Maturase K.